Consider the following 180-residue polypeptide: Large ribosomal subunit protein uL5 (180 aa).

Belongs to the universal ribosomal protein uL5 family. Part of the 50S ribosomal subunit; part of the 5S rRNA/L5/L18/L25 subcomplex. Contacts the 5S rRNA and the P site tRNA. Forms a bridge to the 30S subunit in the 70S ribosome.

Its function is as follows. This is one of the proteins that bind and probably mediate the attachment of the 5S RNA into the large ribosomal subunit, where it forms part of the central protuberance. In the 70S ribosome it contacts protein S13 of the 30S subunit (bridge B1b), connecting the 2 subunits; this bridge is implicated in subunit movement. Contacts the P site tRNA; the 5S rRNA and some of its associated proteins might help stabilize positioning of ribosome-bound tRNAs. This chain is Large ribosomal subunit protein uL5, found in Clostridium botulinum (strain Loch Maree / Type A3).